The primary structure comprises 430 residues: Glutamyl-tRNA reductase (430 aa).

Substrate is bound by residues 50–53 (TCNR), Ser-108, 113–115 (EPQ), and Gln-119. Cys-51 acts as the Nucleophile in catalysis. 188-193 (GAGEMA) contacts NADP(+).

The protein belongs to the glutamyl-tRNA reductase family. Homodimer.

The catalysed reaction is (S)-4-amino-5-oxopentanoate + tRNA(Glu) + NADP(+) = L-glutamyl-tRNA(Glu) + NADPH + H(+). It participates in porphyrin-containing compound metabolism; protoporphyrin-IX biosynthesis; 5-aminolevulinate from L-glutamyl-tRNA(Glu): step 1/2. In terms of biological role, catalyzes the NADPH-dependent reduction of glutamyl-tRNA(Glu) to glutamate 1-semialdehyde (GSA). The sequence is that of Glutamyl-tRNA reductase from Lawsonia intracellularis (strain PHE/MN1-00).